Reading from the N-terminus, the 635-residue chain is Threonine--tRNA ligase (635 aa).

One can recognise a TGS domain in the interval 1–61 (MITVRLPDGS…EQDSDLSIIT (61 aa)). The tract at residues 242–533 (DHRKLGRALD…LIENHAGALP (292 aa)) is catalytic. Cys-333, His-384, and His-510 together coordinate Zn(2+).

It belongs to the class-II aminoacyl-tRNA synthetase family. As to quaternary structure, homodimer. Zn(2+) is required as a cofactor.

It is found in the cytoplasm. It carries out the reaction tRNA(Thr) + L-threonine + ATP = L-threonyl-tRNA(Thr) + AMP + diphosphate + H(+). Its function is as follows. Catalyzes the attachment of threonine to tRNA(Thr) in a two-step reaction: L-threonine is first activated by ATP to form Thr-AMP and then transferred to the acceptor end of tRNA(Thr). Also edits incorrectly charged L-seryl-tRNA(Thr). This is Threonine--tRNA ligase from Herminiimonas arsenicoxydans.